The primary structure comprises 862 residues: MSRFFYGGGSDSESSSSDEEELYERDEEEQSEEEESSEEEETSEEGSDDEEGGVTGAARFMRDMSESEESEDEEKTTVVKSAKDKRLEELESTMKLIDNAKKINDWAVISTEFDKLNRQIVKITQAGPTPRVYIKGVADLEDFVNETVSKQKSGDKKLNASNAKGFNAVKQRIKKNNKDYANLIDKYRKNKEAFLEGKDEAAAPAAAAPRVAKLERVEAPVDVPVADDEGFATVGRGGKTLQYTPESILKHLRVIVESRGKKNTDRLEQIRTMEKLLEVAQNPYQRIRVYLTLISTRFDLTSTSSANYMAPEMWKSAEQDFSSLLSVLENNRDYVVTEGVDEWEDDEKQPQVAAGETLYIPGSVVSYAERLDDELTRSLQHIDPHTAEYIERLSDEKQLYTSLVRAQAYVEGLSKAEKSDPKQDSVNRVVMRRLEHVYFKPSQVITILEDATWKALPSELDSGVTPRGKTGDVENLVLTLCNYLFQYSDGIIRARAMLCQIYFLALHDQYYRARDLMLMSHLTENISNFDVSTQILFNRTLVQIGLCAFRAGLIYEAQNTLSEVCGSGRQKELLAQGIILQRYSTVSPEQERLERQRQLPFHMHINLELLECIYLTSSMFLEVPLMAQTSSSPELKRRVISKTFRRMLDYNERQVFTGPAENTRDGVIMSAKFLAAGDWKKAAEMLNSIKIWELMPQPEKIKEMLSQQIQEEGLRTYLFTYAPFYDSVSVATLASMFELSEKKISAIISRMISHEELAAALDQVNGAIVFRKGVELSRLQSQIVTLADKSMALLEGNEKTLEQRTQGMANAFQRDQGAGARGGRGGGRGGHARGGARFPGQQGRRPGGQQFGGGALGGAIKA.

Positions 1–10 (MSRFFYGGGS) are enriched in gly residues. The tract at residues 1 to 81 (MSRFFYGGGS…DEEKTTVVKS (81 aa)) is disordered. A compositionally biased stretch (acidic residues) spans 16–52 (SSDEEELYERDEEEQSEEEESSEEEETSEEGSDDEEG). Positions 601-775 (FHMHINLELL…GAIVFRKGVE (175 aa)) constitute a PCI domain. The disordered stretch occupies residues 814 to 862 (RDQGAGARGGRGGGRGGHARGGARFPGQQGRRPGGQQFGGGALGGAIKA). Over residues 819–833 (GARGGRGGGRGGHAR) the composition is skewed to gly residues. The span at 835–844 (GARFPGQQGR) shows a compositional bias: low complexity. Residues 845–862 (RPGGQQFGGGALGGAIKA) show a composition bias toward gly residues.

This sequence belongs to the eIF-3 subunit C family. Component of the eukaryotic translation initiation factor 3 (eIF-3) complex.

It localises to the cytoplasm. Its function is as follows. Component of the eukaryotic translation initiation factor 3 (eIF-3) complex, which is involved in protein synthesis of a specialized repertoire of mRNAs and, together with other initiation factors, stimulates binding of mRNA and methionyl-tRNAi to the 40S ribosome. The eIF-3 complex specifically targets and initiates translation of a subset of mRNAs involved in cell proliferation. This is Eukaryotic translation initiation factor 3 subunit C (nip1) from Aspergillus clavatus (strain ATCC 1007 / CBS 513.65 / DSM 816 / NCTC 3887 / NRRL 1 / QM 1276 / 107).